Here is a 363-residue protein sequence, read N- to C-terminus: Cleavage and termination factor 1 (363 aa).

Residues 7-85 (NVVFVGNIPY…RKIRVEFPSN (79 aa)) enclose the RRM domain. The segment at 291-325 (QPASATSSPPSVPQKIPSSNHKSQQANGSDQGNEG) is disordered. Polar residues predominate over residues 306 to 322 (IPSSNHKSQQANGSDQG).

As to quaternary structure, interacts with res2.

It localises to the nucleus. Functionally, component of the cleavage factor I (CF I) involved in pre-mRNA 3'-end processing. In Schizosaccharomyces pombe (strain 972 / ATCC 24843) (Fission yeast), this protein is Cleavage and termination factor 1 (ctf1).